Reading from the N-terminus, the 465-residue chain is MSQNDAAPGQQLWTGRFTEATDAFVERFSASVQFDARLALQDIQGSEAHARMLAARGVLTEAERDAILQGLAEIRQEVVEERFPWSPQLEDVHMNIEHRLTQRIGEAGKKLHTGRSRNDQIATDVRLFLREAIDTIRAELARFQHGLVELAEREADTIMPGFTHLQVAQPVTFGHHMLAWYEMLERDRDRLADCRRRLNQCPLGAAALAGTSFPIDREATARELGFDAPTRNSLDSVSDRDFAIEFCADASLILVHLSRMAEELVLWTSQQFGFIELPDRFCTGSSIMPQKKNPDVAELVRGKAARAQGSLVQLLTLMKGQPLAYNRDNQEDKEPLFDAVDTARDALTAFADMVPALSVNRERCRAAARAGFATATDLADYLVRQGLAFRDAHEVVGRAVRYATEADRDLAELSLEELQQFSTAIGDDVFAVLTLDGSVAARSHVGGTAPEQVRAQAQAARERLA.

Belongs to the lyase 1 family. Argininosuccinate lyase subfamily.

The protein localises to the cytoplasm. It catalyses the reaction 2-(N(omega)-L-arginino)succinate = fumarate + L-arginine. The protein operates within amino-acid biosynthesis; L-arginine biosynthesis; L-arginine from L-ornithine and carbamoyl phosphate: step 3/3. This chain is Argininosuccinate lyase, found in Halorhodospira halophila (strain DSM 244 / SL1) (Ectothiorhodospira halophila (strain DSM 244 / SL1)).